The sequence spans 236 residues: Rho-related GTP-binding protein RhoV (236 aa).

The interval 1 to 27 (MPPRELSEAEPPPLRAPTPPPRRRSAP) is disordered. Pro residues predominate over residues 10-20 (EPPPLRAPTPP). The residue at position 25 (Ser-25) is a Phosphoserine. GTP contacts are provided by residues 38-45 (GDGAVGKS), 85-89 (DTAGQ), and 143-146 (TQAD). The S-palmitoyl cysteine moiety is linked to residue Cys-234.

It belongs to the small GTPase superfamily. Rho family. As to quaternary structure, interacts with PAK2. Mg(2+) serves as cofactor. Highly expressed in pancreas, placenta, and fetal brain.

The protein resides in the cell membrane. Its subcellular location is the endosome membrane. Its function is as follows. Plays a role in the control of the actin cytoskeleton via activation of the JNK pathway. The protein is Rho-related GTP-binding protein RhoV of Homo sapiens (Human).